We begin with the raw amino-acid sequence, 378 residues long: Zinc transporter 7 (378 aa).

Topologically, residues 1–37 (MLPLSIKDDEYKPPKFNLFGKISGWFRSILSDKTSRN) are cytoplasmic. Residues 38–58 (LFFFLCLNLSFAFVELLYGIW) traverse the membrane as a helical segment. At 59 to 67 (SNCLGLISD) the chain is on the lumenal side. Residues 68–88 (SFHMFFDSTAILAGLAASVIS) traverse the membrane as a helical segment. At 89–102 (KWRDNDAFSYGYVR) the chain is on the cytoplasmic side. A helical membrane pass occupies residues 103-123 (AEVLAGFVNGLFLIFTAFFIF). At 124–140 (SEGVERALAPPDVHHER) the chain is on the lumenal side. Residues 141-161 (LLLVSILGFVVNLVGIFVFNH) form a helical membrane-spanning segment. The segment at 161–220 (HGGHGHSHGSGHGHSHSLFNGALDHSHGHEDHCHSHGAKHGGAHSHDHDHAHGHGHLHSH) is his-rich loop. Over 162 to 238 (GGHGHSHGSG…AGPSRQILQG (77 aa)) the chain is Cytoplasmic. The segment at 186–228 (SHGHEDHCHSHGAKHGGAHSHDHDHAHGHGHLHSHDGPSFKET) is disordered. Basic and acidic residues predominate over residues 204–224 (HSHDHDHAHGHGHLHSHDGPS). Residues 239-259 (VFLHILADTLGSIGVIASAIM) traverse the membrane as a helical segment. The Lumenal segment spans residues 260–264 (MQNFG). A helical membrane pass occupies residues 265–285 (LMIADPICSILIAILIVVSVI). Residues 286 to 378 (PLLRESIGIL…LYVQIDFAAM (93 aa)) lie on the Cytoplasmic side of the membrane.

Belongs to the cation diffusion facilitator (CDF) transporter (TC 2.A.4) family. SLC30A subfamily. In terms of assembly, homooligomer.

The protein resides in the golgi apparatus membrane. It localises to the cytoplasmic vesicle. Its subcellular location is the golgi apparatus. It is found in the trans-Golgi network. The protein localises to the sarcoplasmic reticulum. The protein resides in the mitochondrion. The catalysed reaction is Zn(2+)(in) = Zn(2+)(out). Zinc ion transporter mediating zinc entry from the cytosol into the lumen of organelles along the secretory pathway. By contributing to zinc ion homeostasis within the early secretory pathway, regulates the activation and folding of enzymes like alkaline phosphatases. The protein is Zinc transporter 7 of Rattus norvegicus (Rat).